A 169-amino-acid polypeptide reads, in one-letter code: Probable GPI-anchored adhesin-like protein PGA22 (169 aa).

The signal sequence occupies residues 1–18; that stretch reads MKYSTLAWLVIASYTVFA. N-linked (GlcNAc...) asparagine glycosylation is found at Asn-87, Asn-104, Asn-111, and Asn-118. Residue Gly-140 is the site of GPI-anchor amidated glycine attachment. Positions 141-169 are cleaved as a propeptide — removed in mature form; it reads PALTTTTVAEAFSLAAGASLGYLVALLFL.

It is found in the cell membrane. Functionally, putative adhesin which may be involved in cell adhesion and virulence. In Candida albicans (strain SC5314 / ATCC MYA-2876) (Yeast), this protein is Probable GPI-anchored adhesin-like protein PGA22 (PGA22).